Here is a 209-residue protein sequence, read N- to C-terminus: Kynurenine formamidase (209 aa).

Residue W20 coordinates substrate. H50, H54, and D56 together coordinate Zn(2+). H60 functions as the Proton donor/acceptor in the catalytic mechanism. Zn(2+)-binding residues include H161 and E173.

The protein belongs to the Cyclase 1 superfamily. KynB family. In terms of assembly, homodimer. The cofactor is Zn(2+).

The enzyme catalyses N-formyl-L-kynurenine + H2O = L-kynurenine + formate + H(+). It participates in amino-acid degradation; L-tryptophan degradation via kynurenine pathway; L-kynurenine from L-tryptophan: step 2/2. In terms of biological role, catalyzes the hydrolysis of N-formyl-L-kynurenine to L-kynurenine, the second step in the kynurenine pathway of tryptophan degradation. The polypeptide is Kynurenine formamidase (Bacillus cytotoxicus (strain DSM 22905 / CIP 110041 / 391-98 / NVH 391-98)).